The primary structure comprises 447 residues: Adenylosuccinate synthetase (447 aa).

GTP is bound by residues 12–18 and 40–42; these read GDEGKGK and GHT. D13 acts as the Proton acceptor in catalysis. Positions 13 and 40 each coordinate Mg(2+). IMP contacts are provided by residues 13 to 16, 38 to 41, T128, R142, Q223, T238, and R302; these read DEGK and NAGH. Residue H41 is the Proton donor of the active site. Position 298–304 (298–304) interacts with substrate; it reads TTTGRKR. GTP is bound by residues R304, 330 to 332, and 412 to 414; these read KLD and SLG.

The protein belongs to the adenylosuccinate synthetase family. In terms of assembly, homodimer. It depends on Mg(2+) as a cofactor.

The protein resides in the cytoplasm. It catalyses the reaction IMP + L-aspartate + GTP = N(6)-(1,2-dicarboxyethyl)-AMP + GDP + phosphate + 2 H(+). Its pathway is purine metabolism; AMP biosynthesis via de novo pathway; AMP from IMP: step 1/2. In terms of biological role, plays an important role in the de novo pathway of purine nucleotide biosynthesis. Catalyzes the first committed step in the biosynthesis of AMP from IMP. The chain is Adenylosuccinate synthetase from Trichormus variabilis (strain ATCC 29413 / PCC 7937) (Anabaena variabilis).